Consider the following 581-residue polypeptide: Mitosis inhibitor protein kinase mik1 (581 aa).

Disordered regions lie at residues 43–71 (GHEE…HTPM) and 148–178 (NLTN…PLSP). Residues 59-71 (KPSNTKRSPHTPM) are compositionally biased toward polar residues. Basic residues predominate over residues 160–169 (PCKKGTKIKL). One can recognise a Protein kinase domain in the interval 289 to 561 (FQQVKPIHES…LLAMPEMIFI (273 aa)). ATP is bound by residues 295-303 (IHESDFSFV) and Lys-320. Asp-417 acts as the Proton acceptor in catalysis. The Mg(2+) site is built by Asn-422 and Asp-435.

It belongs to the protein kinase superfamily. Ser/Thr protein kinase family. WEE1 subfamily.

The enzyme catalyses L-seryl-[protein] + ATP = O-phospho-L-seryl-[protein] + ADP + H(+). It carries out the reaction L-threonyl-[protein] + ATP = O-phospho-L-threonyl-[protein] + ADP + H(+). In terms of biological role, protein kinase that acts both on serines and on tyrosines. It acts as a negative regulator of entry into mitosis (G2 to M transition). Phosphorylates and inhibits cdc2. The protein is Mitosis inhibitor protein kinase mik1 (mik1) of Schizosaccharomyces pombe (strain 972 / ATCC 24843) (Fission yeast).